A 258-amino-acid chain; its full sequence is Membrane-associated protein Vipp1 (258 aa).

The disordered stretch occupies residues 217-258 (MLPPATPVTQAQLPPQQETTPAKSNEVVDAELDSLRKQLDQL). The segment covering 223–239 (PVTQAQLPPQQETTPAK) has biased composition (polar residues). The segment covering 249-258 (DSLRKQLDQL) has biased composition (basic and acidic residues).

The protein belongs to the PspA/Vipp/IM30 family. As to quaternary structure, polymerizes to form rings, filaments and ribbons. Rings are formed by stacked rungs that tilt to give a dome-shaped curvature. Rings form with symmetries ranging from C11 (55 subunits) to C17 (119 subunits).

It localises to the cell inner membrane. A membrane remodeling protein capable of forming rings and/or filaments on membranes, which then curve and tubulate the bilayer. Rings will form on liposomes, altering their positive curvature so the lipid bilayer is remodeled into a negative curve as the membrane enters the ring. Ring stacks of varying lengths can be seen joining isolated liposomes. A lipid monolayer can be drawn into the center of the rings. Required for thylakoid formation. The chain is Membrane-associated protein Vipp1 from Nostoc punctiforme (strain ATCC 29133 / PCC 73102).